The chain runs to 80 residues: Translation initiation factor IF-1 (80 aa).

Residues arginine 6 to leucine 80 enclose the S1-like domain.

Belongs to the IF-1 family. In terms of assembly, component of the 30S ribosomal translation pre-initiation complex which assembles on the 30S ribosome in the order IF-2 and IF-3, IF-1 and N-formylmethionyl-tRNA(fMet); mRNA recruitment can occur at any time during PIC assembly.

The protein resides in the cytoplasm. Functionally, one of the essential components for the initiation of protein synthesis. Stabilizes the binding of IF-2 and IF-3 on the 30S subunit to which N-formylmethionyl-tRNA(fMet) subsequently binds. Helps modulate mRNA selection, yielding the 30S pre-initiation complex (PIC). Upon addition of the 50S ribosomal subunit IF-1, IF-2 and IF-3 are released leaving the mature 70S translation initiation complex. The sequence is that of Translation initiation factor IF-1 from Aquifex aeolicus (strain VF5).